The sequence spans 212 residues: Stem bromelain (212 aa).

2 cysteine pairs are disulfide-bonded: C23-C63 and C57-C96. Residue C26 is part of the active site. Residue N117 is glycosylated (N-linked (GlcNAc...) asparagine). Residues C152 and C199 are joined by a disulfide bond. Residue H158 is part of the active site.

Belongs to the peptidase C1 family.

The catalysed reaction is Broad specificity for cleavage of proteins, but strong preference for Z-Arg-Arg-|-NHMec among small molecule substrates.. Its function is as follows. Cysteine proteinase with a high level of diversity in substrate specificity. The chain is Stem bromelain from Ananas comosus (Pineapple).